We begin with the raw amino-acid sequence, 128 residues long: uncharacterized protein (128 aa).

Residues 95–123 (IIDFATAKRELDRLTEEIATLKGELAQDK) adopt a coiled-coil conformation.

The protein localises to the cellular thylakoid membrane. This is an uncharacterized protein from Synechocystis sp. (strain ATCC 27184 / PCC 6803 / Kazusa).